The chain runs to 979 residues: Pro-apoptotic serine protease NMA111 (979 aa).

The tract at residues 1-20 (MTIMNEGKKRSHSSSSDDHL) is disordered. The serine protease stretch occupies residues 65-255 (VVSIHFAQVA…LPLDRILRAL (191 aa)). Catalysis depends on charge relay system residues H103, D134, and S217. PDZ domains follow at residues 273–361 (WLLK…RGGT) and 750–836 (SILH…VRDG).

This sequence belongs to the peptidase S1C family.

Its subcellular location is the nucleus. Its function is as follows. Nuclear serine protease which mediates apoptosis. The polypeptide is Pro-apoptotic serine protease NMA111 (NMA111) (Candida glabrata (strain ATCC 2001 / BCRC 20586 / JCM 3761 / NBRC 0622 / NRRL Y-65 / CBS 138) (Yeast)).